Reading from the N-terminus, the 435-residue chain is Elongation factor 1-alpha (435 aa).

Residues 4-229 (KPHLNLIVIG…DQLEIPPKPV (226 aa)) form the tr-type G domain. Residues 13–20 (GHVDHGKS) are G1. Residue 13–20 (GHVDHGKS) coordinates GTP. Ser20 lines the Mg(2+) pocket. The G2 stretch occupies residues 69–73 (GVTIN). The tract at residues 90 to 93 (DAPG) is G3. Residues 90 to 94 (DAPGH) and 152 to 155 (NKMD) each bind GTP. The G4 stretch occupies residues 152-155 (NKMD). The G5 stretch occupies residues 193–195 (VAP).

This sequence belongs to the TRAFAC class translation factor GTPase superfamily. Classic translation factor GTPase family. EF-Tu/EF-1A subfamily.

It localises to the cytoplasm. The catalysed reaction is GTP + H2O = GDP + phosphate + H(+). Functionally, GTP hydrolase that promotes the GTP-dependent binding of aminoacyl-tRNA to the A-site of ribosomes during protein biosynthesis. This is Elongation factor 1-alpha from Sulfurisphaera tokodaii (strain DSM 16993 / JCM 10545 / NBRC 100140 / 7) (Sulfolobus tokodaii).